Here is a 264-residue protein sequence, read N- to C-terminus: uncharacterized protein (264 aa).

The first 23 residues, 1-23 (MQQWNLTISNILIGLFFCFSAQA), serve as a signal peptide directing secretion.

This is an uncharacterized protein from Shewanella oneidensis (strain ATCC 700550 / JCM 31522 / CIP 106686 / LMG 19005 / NCIMB 14063 / MR-1).